The primary structure comprises 709 residues: MERTAGKELALAPLQDWGEETEDGAVYSVSLRRQRSQRSTPERSGEGQTPIPATDTFLHYRTSKVRALRAARLERLVHELVSGDREQDPGFVPAFLATHRAFVPTARVLGFLLPPPPPPPPPPAGVDSKRTEGQDLNFSKNLRAVVSVLGSWLRNHPQDFRDPPDHQNLGNVRIFLGWAAPGGAEAREAEKLLEDFLKEAKGEQTEEEKRLAWSGPPRIAQTPGSEFAEDCVEEEGPSSEGPELLDFSVDDVAEQLTLMDVELFLRVRSCECLGSMWSQRDRPGAAGISPTVRATVAQFNTVTGCVLGSVLAAPGLAASQRAQRIEKWIRIAQRCRELRNFSSLRAILSALQSNPIYRLKRSWGAVSREPLSVFRKLSQIFSDEDNHLSSRAILSQEETTEDDDCPSGSLPSKLPPGPVPYLGTFLTDLVMLDTALPDTLKGNLINFEKRRKEWEILARIQQLQQRCQRYSLSPRPPILAALRAQRQLSEEQSYRVSRVIEPPAASCPSSPRIRRRISLTKRLSAKLSREKNSSPGGSPGDPSSPTSSVSPGSPPSSPRNREPPPPGSPPASPGPQSPSTKLSLTMDPPGPWPVTLTPSSSRVPLLGQQTSEARVIRVSINNNHGNLYRSILLTCQDKAPSVVQRALEKHNVPQPWARDYQLFQVLPGDRELLIPDGANVFYAMSPAAPGDFLLRRKEGTGHTLSASPT.

The interval 26-55 is disordered; the sequence is VYSVSLRRQRSQRSTPERSGEGQTPIPATD. Residues 64 to 201 form the N-terminal Ras-GEF domain; that stretch reads KVRALRAARL…LLEDFLKEAK (138 aa). 3 disordered regions span residues 203–225, 395–416, and 502–604; these read EQTE…TPGS, SQEE…KLPP, and PPAA…SRVP. Residues 248 to 503 enclose the Ras-GEF domain; that stretch reads SVDDVAEQLT…YRVSRVIEPP (256 aa). 2 stretches are compositionally biased toward low complexity: residues 502-511 and 533-551; these read PPAASCPSSP and SSPG…SVSP. Phosphoserine occurs at positions 506 and 510. Over residues 552–576 the composition is skewed to pro residues; sequence GSPPSSPRNREPPPPGSPPASPGPQ. Phosphoserine is present on residues serine 553, serine 568, serine 572, serine 577, and serine 600. Positions 611-706 are interaction with HRAS, MRAS and RIT1; that stretch reads SEARVIRVSI…KEGTGHTLSA (96 aa). The 88-residue stretch at 612–699 folds into the Ras-associating domain; that stretch reads EARVIRVSIN…GDFLLRRKEG (88 aa).

In terms of assembly, interacts with GTP-bound forms of RIT1, HRAS and MRAS. Widely expressed. Expressed at high levels in the liver and kidney.

Guanine nucleotide exchange factor (GEF) for Ral-A. Potential effector of GTPase HRas and Ras-related protein M-Ras. Negatively regulates Elk-1-dependent gene induction downstream of HRas and MEKK1. The protein is Ral guanine nucleotide dissociation stimulator-like 3 (Rgl3) of Mus musculus (Mouse).